Reading from the N-terminus, the 505-residue chain is Maturase K (505 aa).

This sequence belongs to the intron maturase 2 family. MatK subfamily.

It localises to the plastid. The protein localises to the chloroplast. Usually encoded in the trnK tRNA gene intron. Probably assists in splicing its own and other chloroplast group II introns. The protein is Maturase K of Kunzea ericoides (White teatree).